The primary structure comprises 458 residues: ATP synthase subunit beta (458 aa).

Residue G148–T155 participates in ATP binding.

This sequence belongs to the ATPase alpha/beta chains family. F-type ATPases have 2 components, CF(1) - the catalytic core - and CF(0) - the membrane proton channel. CF(1) has five subunits: alpha(3), beta(3), gamma(1), delta(1), epsilon(1). CF(0) has three main subunits: a(1), b(2) and c(9-12). The alpha and beta chains form an alternating ring which encloses part of the gamma chain. CF(1) is attached to CF(0) by a central stalk formed by the gamma and epsilon chains, while a peripheral stalk is formed by the delta and b chains.

The protein localises to the cell inner membrane. It catalyses the reaction ATP + H2O + 4 H(+)(in) = ADP + phosphate + 5 H(+)(out). Functionally, produces ATP from ADP in the presence of a proton gradient across the membrane. The catalytic sites are hosted primarily by the beta subunits. In Francisella tularensis subsp. novicida (strain U112), this protein is ATP synthase subunit beta.